The chain runs to 461 residues: Phosphoglucosamine mutase (461 aa).

S107 serves as the catalytic Phosphoserine intermediate. Mg(2+) contacts are provided by S107, D254, D256, and D258. S107 is subject to Phosphoserine.

Belongs to the phosphohexose mutase family. Mg(2+) is required as a cofactor. Activated by phosphorylation.

It catalyses the reaction alpha-D-glucosamine 1-phosphate = D-glucosamine 6-phosphate. Its function is as follows. Catalyzes the conversion of glucosamine-6-phosphate to glucosamine-1-phosphate. This Bifidobacterium longum (strain DJO10A) protein is Phosphoglucosamine mutase.